The following is an 83-amino-acid chain: Male-specific opa-containing protein (83 aa).

Positions 1–18 are cleaved as a signal peptide; that stretch reads MNFIQIAVLFVLVAVALA. The tract at residues 23–83 is disordered; it reads DPANLPAPEA…NVNHNVITIG (61 aa). The span at 28 to 49 shows a compositional bias: low complexity; sequence PAPEAAAAPPAAAAAPPAAAAA. A compositionally biased stretch (pro residues) spans 50–59; it reads PPAPPAPPAA.

Adult male abdomen.

Its function is as follows. May be a male specific regulatory factor. The protein is Male-specific opa-containing protein (msopa) of Drosophila melanogaster (Fruit fly).